Consider the following 401-residue polypeptide: MDYMYGPGRHHLFVPGPVNIPEPVIRAMNRNNEDYRSPAIPALTKTLLEDVKKIFKTTSGTPFLFPTTGTGAWESALTNTLSPGDRIVSFLIGQFSLLWIDQQKRLNFNVDVVESDWGQGANLQVLASKLSQDENHTIKAICIVHNETATGVTNDISAVRTLLDHYKHPALLLVDGVSSICALDFRMDEWGVDVALTGSQKALSLPTGLGIVCASPKALEATKTSKSLKVFFDWNDYLKFYKLGTYWPYTPSIQLLYGLRAALDLIFEEGLENIIARHARLGKATRLAVEAWGLKNCTQKEEWISNTVTAVMVPPHIDGSEIVRRAWQRYNLSLGLGLNKVAGKVFRIGHLGNVNELQLLGCLAGVEMILKDVGYPVVMGSGVAAASTYLQHHIPLIPSRI.

Met-1 carries the N-acetylmethionine modification. Residues 68–70 (TGT), Thr-148, and 200–201 (QK) each bind pyridoxal 5'-phosphate. Lys-201 is a 3-hydroxypyruvate binding site. Lys-201 bears the N6-(pyridoxal phosphate)lysine mark. A Phosphoserine modification is found at Ser-204. Arg-347 lines the 3-hydroxypyruvate pocket. Residues 399-401 (SRI) carry the Microbody targeting signal motif.

It belongs to the class-V pyridoxal-phosphate-dependent aminotransferase family. As to quaternary structure, forms homodimers. Interacts with RABGAP22. The cofactor is pyridoxal 5'-phosphate. As to expression, widely expressed. Preferentially expressed in green, leafy tissues, root cortex and epidermis, developing siliques and dry seeds.

It localises to the peroxisome. The catalysed reaction is glyoxylate + L-serine = 3-hydroxypyruvate + glycine. It carries out the reaction glyoxylate + L-alanine = glycine + pyruvate. The enzyme catalyses L-serine + pyruvate = 3-hydroxypyruvate + L-alanine. It catalyses the reaction 3-hydroxypyruvate + L-asparagine = 2-oxosuccinamate + L-serine. The catalysed reaction is L-asparagine + glyoxylate = 2-oxosuccinamate + glycine. It carries out the reaction L-asparagine + pyruvate = 2-oxosuccinamate + L-alanine. With respect to regulation, inhibited by aminooxyacetate and beta-chloro-L-alanine, but not by p-hydroxymercuribenzoate. Photorespiratory enzyme that catalyzes transamination reactions with multiple substrates, including asparagine. Functions exclusively as a catabolic enzyme in Asn metabolism. Involved in root development during seedling establishment after seed germination by regulating serine homeostasis and acetate conversion. The polypeptide is Serine--glyoxylate aminotransferase (Arabidopsis thaliana (Mouse-ear cress)).